A 126-amino-acid polypeptide reads, in one-letter code: UPF0102 protein plu4003 (126 aa).

Belongs to the UPF0102 family.

This Photorhabdus laumondii subsp. laumondii (strain DSM 15139 / CIP 105565 / TT01) (Photorhabdus luminescens subsp. laumondii) protein is UPF0102 protein plu4003.